Consider the following 59-residue polypeptide: MNFNKLFLIVILAALLLLGQTEAGRSKKLGKKIEKAGKRVFNAAQKGLPVAAGVQALGR.

An N-terminal signal peptide occupies residues 1–23; that stretch reads MNFNKLFLIVILAALLLLGQTEA. At L57 the chain carries Leucine amide.

Belongs to the cecropin family.

The protein localises to the secreted. In terms of biological role, cecropins have lytic and antibacterial activity against several Gram-positive and Gram-negative bacteria. This Culex pipiens pipiens (Northern house mosquito) protein is Cecropin-B2 (CECB2).